A 182-amino-acid chain; its full sequence is Large ribosomal subunit protein uL5 (182 aa).

The protein belongs to the universal ribosomal protein uL5 family. As to quaternary structure, part of the 50S ribosomal subunit; part of the 5S rRNA/L5/L18/L25 subcomplex. Contacts the 5S rRNA and the P site tRNA. Forms a bridge to the 30S subunit in the 70S ribosome.

In terms of biological role, this is one of the proteins that bind and probably mediate the attachment of the 5S RNA into the large ribosomal subunit, where it forms part of the central protuberance. In the 70S ribosome it contacts protein S13 of the 30S subunit (bridge B1b), connecting the 2 subunits; this bridge is implicated in subunit movement. Contacts the P site tRNA; the 5S rRNA and some of its associated proteins might help stabilize positioning of ribosome-bound tRNAs. The sequence is that of Large ribosomal subunit protein uL5 from Nostoc sp. (strain PCC 7120 / SAG 25.82 / UTEX 2576).